Reading from the N-terminus, the 175-residue chain is Dual-action ribosomal maturation protein DarP (175 aa).

Belongs to the DarP family.

The protein resides in the cytoplasm. Its function is as follows. Member of a network of 50S ribosomal subunit biogenesis factors which assembles along the 30S-50S interface, preventing incorrect 23S rRNA structures from forming. Promotes peptidyl transferase center (PTC) maturation. This chain is Dual-action ribosomal maturation protein DarP, found in Vibrio parahaemolyticus serotype O3:K6 (strain RIMD 2210633).